A 296-amino-acid polypeptide reads, in one-letter code: Acetylglutamate kinase (296 aa).

Residues 67–68 (GG), Arg89, and Asn194 each bind substrate.

This sequence belongs to the acetylglutamate kinase family. ArgB subfamily.

The protein localises to the cytoplasm. The catalysed reaction is N-acetyl-L-glutamate + ATP = N-acetyl-L-glutamyl 5-phosphate + ADP. The protein operates within amino-acid biosynthesis; L-arginine biosynthesis; N(2)-acetyl-L-ornithine from L-glutamate: step 2/4. Its function is as follows. Catalyzes the ATP-dependent phosphorylation of N-acetyl-L-glutamate. In Brucella anthropi (strain ATCC 49188 / DSM 6882 / CCUG 24695 / JCM 21032 / LMG 3331 / NBRC 15819 / NCTC 12168 / Alc 37) (Ochrobactrum anthropi), this protein is Acetylglutamate kinase.